A 285-amino-acid chain; its full sequence is Polyamine aminopropyltransferase (285 aa).

A PABS domain is found at 2 to 237 (EFWFSELHSP…GYWLFGFASK (236 aa)). Residue Q31 coordinates S-methyl-5'-thioadenosine. Residue D86 coordinates spermidine. S-methyl-5'-thioadenosine-binding positions include E106 and 137–138 (DA). The active-site Proton acceptor is the D155.

The protein belongs to the spermidine/spermine synthase family. As to quaternary structure, homodimer or homotetramer.

The protein localises to the cytoplasm. The enzyme catalyses S-adenosyl 3-(methylsulfanyl)propylamine + putrescine = S-methyl-5'-thioadenosine + spermidine + H(+). Its pathway is amine and polyamine biosynthesis; spermidine biosynthesis; spermidine from putrescine: step 1/1. Functionally, catalyzes the irreversible transfer of a propylamine group from the amino donor S-adenosylmethioninamine (decarboxy-AdoMet) to putrescine (1,4-diaminobutane) to yield spermidine. The polypeptide is Polyamine aminopropyltransferase (Lachnospira eligens (strain ATCC 27750 / DSM 3376 / VPI C15-48 / C15-B4) (Eubacterium eligens)).